The following is a 708-amino-acid chain: Capsid scaffolding protein (708 aa).

Active-site charge relay system residues include H63, S132, and H157. Disordered stretches follow at residues 269-339 (ASAE…MSHP), 455-565 (HPSY…QQQR), and 593-619 (ALPS…SGGG). Residues 284 to 293 (PAAGARVPSS) are compositionally biased toward low complexity. Pro residues predominate over residues 294-311 (SPSPPVEPPSPVQPPALP). Residues 326-339 (SPSEPAEAASMSHP) are compositionally biased toward low complexity. The interaction with pAP stretch occupies residues 333-352 (AASMSHPLSAAVPAATAPPG). Residues 498 to 513 (KQHRHGGSGGHNKRRK) are compositionally biased toward basic residues. 2 consecutive short sequence motifs (nuclear localization signal) follow at residues 510 to 515 (KRRKET) and 537 to 543 (RARKRLK). Residues 593–611 (ALPSAASSSPTTTTVCTPT) are compositionally biased toward low complexity. The interval 688–708 (PPKDMVDLNRRIFVAALNKLE) is interaction with major capsid protein.

Belongs to the herpesviridae capsid scaffolding protein family. As to quaternary structure, homomultimer. Interacts with major capsid protein. Exists in a monomer-dimer equilibrium with the dimer being the active species. Capsid scaffolding protein is cleaved by assemblin after formation of the spherical procapsid. As a result, the capsid obtains its mature, icosahedral shape. Cleavages occur at two or more sites: release (R-site) and maturation (M-site).

Its subcellular location is the host cytoplasm. It is found in the host nucleus. It catalyses the reaction Cleaves -Ala-|-Ser- and -Ala-|-Ala- bonds in the scaffold protein.. In terms of biological role, acts as a scaffold protein by binding major capsid protein in the cytoplasm, inducing the nuclear localization of both proteins. Multimerizes in the nucleus such as major capsid protein forms the icosahedral T=16 capsid. Autocatalytic cleavage releases the assembly protein, and subsequently abolishes interaction with major capsid protein. Cleavages products are evicted from the capsid before or during DNA packaging. Its function is as follows. Protease that plays an essential role in virion assembly within the nucleus. Catalyzes the cleavage of the assembly protein after formation of the spherical procapsid. By that cleavage, the capsid matures and gains its icosahedral shape. The cleavage sites seem to include -Ala-Ser-, -Ala-Ala-, as well as Ala-Thr bonds. Assemblin and cleavages products are evicted from the capsid before or during DNA packaging. Functionally, plays a major role in capsid assembly. Acts as a scaffold protein by binding major capsid protein. Multimerizes in the nucleus such as major capsid protein forms the icosahedral T=16 capsid. Cleaved by assemblin after capsid completion. The cleavages products are evicted from the capsid before or during DNA packaging. The chain is Capsid scaffolding protein (UL80) from Homo sapiens (Human).